Reading from the N-terminus, the 244-residue chain is Protein A47 (244 aa).

This sequence belongs to the orthopoxvirus A47 protein family.

This is Protein A47 from Homo sapiens (Human).